We begin with the raw amino-acid sequence, 587 residues long: Pyruvate decarboxylase 3 (587 aa).

Substrate-binding residues include aspartate 48 and histidine 135. A thiamine pyrophosphate binding region spans residues 415–496 (DSWFNCQKLR…FLINNGGYTI (82 aa)). Aspartate 464, asparagine 491, and glycine 493 together coordinate Mg(2+). A substrate-binding site is contributed by glutamate 497.

Belongs to the TPP enzyme family. As to quaternary structure, homotetramer. Requires a metal cation as cofactor. The cofactor is thiamine diphosphate.

It carries out the reaction a 2-oxocarboxylate + H(+) = an aldehyde + CO2. The protein is Pyruvate decarboxylase 3 (PDC3) of Oryza sativa subsp. japonica (Rice).